The primary structure comprises 187 residues: Elongation factor P (187 aa).

This sequence belongs to the elongation factor P family.

The protein localises to the cytoplasm. It functions in the pathway protein biosynthesis; polypeptide chain elongation. Functionally, involved in peptide bond synthesis. Stimulates efficient translation and peptide-bond synthesis on native or reconstituted 70S ribosomes in vitro. Probably functions indirectly by altering the affinity of the ribosome for aminoacyl-tRNA, thus increasing their reactivity as acceptors for peptidyl transferase. The polypeptide is Elongation factor P (Mycobacterium marinum (strain ATCC BAA-535 / M)).